We begin with the raw amino-acid sequence, 926 residues long: MEESGMAHESAEDLFHFNVGGWHFSVPRSKLSQFPDSLLWKEASALTSSESQRLFIDRDGSTFRHVHYYLYTSKLSFSSCAELNLLYEQALGLQLMPLLQTLDNLKEGKHHLRVRPADLPVAERASLNYWRTWKCISKPSEFPIKSPAFTGLHDKAPLGLMDTPLLDTEEEVHYCFLPLDLVAKYPSLVTEDNLLWLAETVALIECECSEFRFIVNFLRSQKILLPDNFSNIDVLEAEVEILEIPALTEAVRWYRMNMGGCSPTTCSPLSPGKGARTASLESVKPLYTMALGLLVKYPDSALGQLRIESTLDGSRLYITGNGVLFQHVKNWLGTCRLPLTETISEVYELCAFLDKRDITYEPIKVALKTHLEPRTLAPMDVLNEWTAEITVYSPQQIIKVYVGSHWYATTLQTLLKYPELLSNPQRVYWITYGQTLLIHGDGQMFRHILNFLRLGKLFLPSEFKEWPLFCQEVEEYHIPSLSEALAQCEAYKSWTQEKESENEEAFSIRRLHVVTEGPGSLVEFSRDTKETTAYMPVDFEDCSDRTPWNKAKGNLVRSNQMDEAEQYTRPIQVSLCRNAKRAGNPSTYSHCRGLCTNPGHWGSHPESPPKKKCTTINLTQKSETKDPPATPMQKLISLVREWDMVNCKQWEFQPLTATRSSPLEEATLQLPLGSEAASQPSTSAAWKAHSTASEKDPGPQAGAGAGAKDKGPEPTFKPYLPPKRAGTLKDWSKQRTKERESPAPEQPLPEASEVDSLGVILKVTHPPVVGSDGFCMFFEDSIIYTTEMDNLRHTTPTASPQPQEVTFLSFSLSWEEMFYAQKCHCFLADIIMDSIRQKDPKAITAKVVSLANRLWTLHISPKQFVVDLLAITGFKDDRHTQERLYSWVELTLPFARKYGRCMDLLIQRGLSRSVSYSILGKYLQED.

One can recognise a BTB 1 domain in the interval 18 to 72 (NVGGWHFSVPRSKLSQFPDSLLWKEASALTSSESQRLFIDRDGSTFRHVHYYLYT). Ser270 is modified (phosphoserine). In terms of domain architecture, BTB 2 spans 398-485 (IKVYVGSHWY…YHIPSLSEAL (88 aa)). The disordered stretch occupies residues 673 to 751 (GSEAASQPST…PAPEQPLPEA (79 aa)). Residues 730–742 (DWSKQRTKERESP) are compositionally biased toward basic and acidic residues.

Identified in a complex with ZNF541, HDAC1 and HSPA2. Identified in a complex with ZNF541 and HDAC1. Identified in a complex with HDAC1, HDAC2, DNTTIP1 and ZNF541.

The protein resides in the nucleus. Its function is as follows. Transcription regulator which is essential for male fertility and for the completion of meiotic prophase in spermatocytes. Regulates progression of the pachytene stage of meiotic prophase and promotes the transcriptional activation activity ZNF541. Required for the organization of chromosomes during metaphase I. The protein is BTB/POZ domain-containing protein KCTD19 (KCTD19) of Homo sapiens (Human).